The primary structure comprises 263 residues: 3-methyl-2-oxobutanoate hydroxymethyltransferase (263 aa).

Mg(2+) contacts are provided by Asp-43 and Asp-82. 3-methyl-2-oxobutanoate is bound by residues 43–44, Asp-82, and Lys-111; that span reads DS. Glu-113 provides a ligand contact to Mg(2+). Catalysis depends on Glu-180, which acts as the Proton acceptor.

The protein belongs to the PanB family. In terms of assembly, homodecamer; pentamer of dimers. The cofactor is Mg(2+).

The protein resides in the cytoplasm. It carries out the reaction 3-methyl-2-oxobutanoate + (6R)-5,10-methylene-5,6,7,8-tetrahydrofolate + H2O = 2-dehydropantoate + (6S)-5,6,7,8-tetrahydrofolate. Its pathway is cofactor biosynthesis; (R)-pantothenate biosynthesis; (R)-pantoate from 3-methyl-2-oxobutanoate: step 1/2. In terms of biological role, catalyzes the reversible reaction in which hydroxymethyl group from 5,10-methylenetetrahydrofolate is transferred onto alpha-ketoisovalerate to form ketopantoate. This Bdellovibrio bacteriovorus (strain ATCC 15356 / DSM 50701 / NCIMB 9529 / HD100) protein is 3-methyl-2-oxobutanoate hydroxymethyltransferase.